A 389-amino-acid chain; its full sequence is MVTVEEVRKAQRAQGPATIMAIGTSTPQNCVDQSTYPDYYFRITNSEHLVELKEKFKRMCEKSMIKKRYMYLTEEILKENPNICAYMAPSLDARQDIVVVEVPKLGKEAAQKAIKEWGQPKSKITHLVFCTTSGVDMPGADYQLTKLLGLQPSVKRFMMYQQGCFAGGTVIRLAKDLAENNKGARVLVVCSEITAVTFRGPSDAHLDSLVGQALFGDGAAALIIGSDPDPDLERPLFQLVSAAQTILPDSGGAIDGHLREVGLTFHLLKDVPGLISKHIEKSLNEAFQPLGIHDWNSLFWIAHPGGPAILDQVEEKLELKPEKLRATRHVLSEYGNMSSACVLFILDEMRKASSKEGLNTTGEGLEWGVLFGFGPGLTVETVVLHSVSA.

The active site involves Cys-164.

This sequence belongs to the thiolase-like superfamily. Chalcone/stilbene synthases family.

The catalysed reaction is (E)-4-coumaroyl-CoA + 3 malonyl-CoA + 3 H(+) = 2',4,4',6'-tetrahydroxychalcone + 3 CO2 + 4 CoA. It functions in the pathway secondary metabolite biosynthesis; flavonoid biosynthesis. Functionally, the primary product of this enzyme is 4,2',4',6'-tetrahydroxychalcone (also termed naringenin-chalcone or chalcone) which can under specific conditions spontaneously isomerize into naringenin. This chain is Chalcone synthase E (CHSE), found in Ipomoea nil (Japanese morning glory).